The chain runs to 373 residues: Protein translocase subunit SecF (373 aa).

A run of 6 helical transmembrane segments spans residues 26–46 (IWYG…AVRG), 142–162 (WQGL…AFEW), 166–186 (LAAF…YALV), 193–213 (GTVI…VVVF), 251–271 (VVAL…LGAG), and 280–300 (LFVG…PLVA). The segment covering 322–332 (QGAAKGESAES) has biased composition (low complexity). A disordered region spans residues 322 to 373 (QGAAKGESAESAADEGAYDADEPDDAAPAVVGPRNQPASRGRGRGRPSGKRR). Over residues 333-346 (AADEGAYDADEPDD) the composition is skewed to acidic residues. Residues 362-373 (GRGRGRPSGKRR) show a composition bias toward basic residues.

This sequence belongs to the SecD/SecF family. SecF subfamily. Forms a complex with SecD. Part of the essential Sec protein translocation apparatus which comprises SecA, SecYEG and auxiliary proteins SecDF. Other proteins may also be involved.

It localises to the cell membrane. Its function is as follows. Part of the Sec protein translocase complex. Interacts with the SecYEG preprotein conducting channel. SecDF uses the proton motive force (PMF) to complete protein translocation after the ATP-dependent function of SecA. This Streptomyces coelicolor (strain ATCC BAA-471 / A3(2) / M145) protein is Protein translocase subunit SecF.